A 98-amino-acid chain; its full sequence is MTLIHMNILMAFSMSLVGLLMYRSHLMSALLCLEGMMLSLFILAALTILNSHFTLANMMPIILLVFAACEAAIGLALLVMVSNTYGTDYVQSLNLLQC.

3 helical membrane-spanning segments follow: residues 1-21, 29-49, and 61-81; these read MTLIHMNILMAFSMSLVGLLM, ALLCLEGMMLSLFILAALTIL, and IILLVFAACEAAIGLALLVMV.

This sequence belongs to the complex I subunit 4L family. As to quaternary structure, core subunit of respiratory chain NADH dehydrogenase (Complex I) which is composed of 45 different subunits.

It is found in the mitochondrion inner membrane. It catalyses the reaction a ubiquinone + NADH + 5 H(+)(in) = a ubiquinol + NAD(+) + 4 H(+)(out). Its function is as follows. Core subunit of the mitochondrial membrane respiratory chain NADH dehydrogenase (Complex I) which catalyzes electron transfer from NADH through the respiratory chain, using ubiquinone as an electron acceptor. Part of the enzyme membrane arm which is embedded in the lipid bilayer and involved in proton translocation. In Balaenoptera omurai (Omura's baleen whale), this protein is NADH-ubiquinone oxidoreductase chain 4L (MT-ND4L).